Here is a 433-residue protein sequence, read N- to C-terminus: Nuclear hormone receptor family member nhr-98 (433 aa).

The segment at residues 41–116 is a DNA-binding region (nuclear receptor); the sequence is SKKCQICENP…FGMTIDNFQF (76 aa). 2 consecutive NR C4-type zinc fingers follow at residues 44 to 64 and 80 to 104; these read CQIC…CRAC and CKTE…MQRC. The NR LBD domain maps to 177–433; it reads ETPYQVSNVL…CSHPGIFLNA (257 aa).

It belongs to the nuclear hormone receptor family.

The protein localises to the nucleus. In terms of biological role, orphan nuclear receptor. This chain is Nuclear hormone receptor family member nhr-98 (nhr-98), found in Caenorhabditis elegans.